A 339-amino-acid chain; its full sequence is Phosphate acyltransferase (339 aa).

This sequence belongs to the PlsX family. Homodimer. Probably interacts with PlsY.

It is found in the cytoplasm. The catalysed reaction is a fatty acyl-[ACP] + phosphate = an acyl phosphate + holo-[ACP]. It participates in lipid metabolism; phospholipid metabolism. Functionally, catalyzes the reversible formation of acyl-phosphate (acyl-PO(4)) from acyl-[acyl-carrier-protein] (acyl-ACP). This enzyme utilizes acyl-ACP as fatty acyl donor, but not acyl-CoA. This chain is Phosphate acyltransferase, found in Acetivibrio thermocellus (strain ATCC 27405 / DSM 1237 / JCM 9322 / NBRC 103400 / NCIMB 10682 / NRRL B-4536 / VPI 7372) (Clostridium thermocellum).